Here is a 322-residue protein sequence, read N- to C-terminus: RING finger protein 113B (322 aa).

The interval 24-92 is disordered; that stretch reads KPGRKGAAGL…EEAAPESLDV (69 aa). The segment covering 46 to 60 has biased composition (low complexity); sequence SSSSGDEGDTVAQPP. The segment at 190–218 adopts a C3H1-type zinc-finger fold; it reads DYQPDICKDYKETGFCGFGDSCKFLHDRS. Residues 256 to 294 form an RING-type zinc finger; sequence CFICRQAFQNPVVTKCRHYFCESCALEHFRATPRCYICD.

In Homo sapiens (Human), this protein is RING finger protein 113B (RNF113B).